Consider the following 89-residue polypeptide: MSLTQIRKQELMTEYQAHETDTGSADLQVAFLTERITQLTGHLKANPKDHASRRGLLKMIGRRKRLLSFINAREPERYQALIKRLGIRR.

The protein belongs to the universal ribosomal protein uS15 family. In terms of assembly, part of the 30S ribosomal subunit. Forms a bridge to the 50S subunit in the 70S ribosome, contacting the 23S rRNA.

Functionally, one of the primary rRNA binding proteins, it binds directly to 16S rRNA where it helps nucleate assembly of the platform of the 30S subunit by binding and bridging several RNA helices of the 16S rRNA. Forms an intersubunit bridge (bridge B4) with the 23S rRNA of the 50S subunit in the ribosome. This is Small ribosomal subunit protein uS15 from Synechocystis sp. (strain ATCC 27184 / PCC 6803 / Kazusa).